Consider the following 179-residue polypeptide: Large ribosomal subunit protein uL5 (179 aa).

The protein belongs to the universal ribosomal protein uL5 family. As to quaternary structure, part of the 50S ribosomal subunit; part of the 5S rRNA/L5/L18/L25 subcomplex. Contacts the 5S rRNA and the P site tRNA. Forms a bridge to the 30S subunit in the 70S ribosome.

Functionally, this is one of the proteins that bind and probably mediate the attachment of the 5S RNA into the large ribosomal subunit, where it forms part of the central protuberance. In the 70S ribosome it contacts protein S13 of the 30S subunit (bridge B1b), connecting the 2 subunits; this bridge is implicated in subunit movement. Contacts the P site tRNA; the 5S rRNA and some of its associated proteins might help stabilize positioning of ribosome-bound tRNAs. This Haemophilus influenzae (strain 86-028NP) protein is Large ribosomal subunit protein uL5.